Reading from the N-terminus, the 164-residue chain is Cytochrome c-type biogenesis protein CcmE (164 aa).

Topologically, residues Met1–Arg8 are cytoplasmic. A helical; Signal-anchor for type II membrane protein membrane pass occupies residues Leu9 to Ala29. Residues Leu30–Lys164 are Periplasmic-facing. Residues His131 and Tyr135 each contribute to the heme site. Residues Val140 to Lys164 form a disordered region. Residues Ser147 to Ser158 show a composition bias toward basic and acidic residues.

This sequence belongs to the CcmE/CycJ family.

Its subcellular location is the cell inner membrane. In terms of biological role, heme chaperone required for the biogenesis of c-type cytochromes. Transiently binds heme delivered by CcmC and transfers the heme to apo-cytochromes in a process facilitated by CcmF and CcmH. The polypeptide is Cytochrome c-type biogenesis protein CcmE (Shewanella piezotolerans (strain WP3 / JCM 13877)).